We begin with the raw amino-acid sequence, 294 residues long: MLENLSTEHRNEKTMNLDEMSIKEVLQSMNEEDRTVALAVEKEIEQIEKVVQTVIKSFEEEGRLIYIGAGTSGRLGILDAVECPPTFGTDDKMVQGYIAGGLKAFTKAVEGAEDREELAEEDLKSIGLNEKDTVIGIAASGRTPYVIGGLKYAQSVGASTASISCNKNAEISKYAKLNVEVETGAEILTGSTRLKAGTAQKLVLNMISTASMIGVGKVYKNLMVDVQSTNEKLVERSKRIIMEATGASYEVAAEYYEKAERNVKAAIVMVLLQCEYGEALEKLKYAKGFVKKAL.

The SIS domain occupies 54 to 217; it reads VIKSFEEEGR…STASMIGVGK (164 aa). Glu-82 (proton donor) is an active-site residue. The active site involves Glu-113.

It belongs to the GCKR-like family. MurNAc-6-P etherase subfamily. Homodimer.

The enzyme catalyses N-acetyl-D-muramate 6-phosphate + H2O = N-acetyl-D-glucosamine 6-phosphate + (R)-lactate. It functions in the pathway amino-sugar metabolism; N-acetylmuramate degradation. Its function is as follows. Specifically catalyzes the cleavage of the D-lactyl ether substituent of MurNAc 6-phosphate, producing GlcNAc 6-phosphate and D-lactate. This chain is N-acetylmuramic acid 6-phosphate etherase, found in Bacillus cereus (strain G9842).